The primary structure comprises 510 residues: NAD(P)H-quinone oxidoreductase subunit 2, chloroplastic (510 aa).

12 consecutive transmembrane segments (helical) span residues 24–44 (LLLF…GLIL), 59–79 (WFYF…LFRW), 99–119 (IFQF…VEYI), 124–144 (MAIT…MFLC), 149–169 (LITI…LSGY), 184–204 (LLMG…LYGL), 229–249 (ISIA…PAPF), 295–315 (WHLL…LIAI), 323–343 (MLAY…IVGD), 347–367 (GYAS…GTFA), 395–415 (ALSL…AGFF), and 418–438 (LHLF…IGLL).

The protein belongs to the complex I subunit 2 family. NDH is composed of at least 16 different subunits, 5 of which are encoded in the nucleus.

It is found in the plastid. The protein resides in the chloroplast thylakoid membrane. The enzyme catalyses a plastoquinone + NADH + (n+1) H(+)(in) = a plastoquinol + NAD(+) + n H(+)(out). It catalyses the reaction a plastoquinone + NADPH + (n+1) H(+)(in) = a plastoquinol + NADP(+) + n H(+)(out). Functionally, NDH shuttles electrons from NAD(P)H:plastoquinone, via FMN and iron-sulfur (Fe-S) centers, to quinones in the photosynthetic chain and possibly in a chloroplast respiratory chain. The immediate electron acceptor for the enzyme in this species is believed to be plastoquinone. Couples the redox reaction to proton translocation, and thus conserves the redox energy in a proton gradient. This is NAD(P)H-quinone oxidoreductase subunit 2, chloroplastic from Muilla maritima (Sea muilla).